The chain runs to 249 residues: Putative nicotinamide mononucleotide adenylyltransferase (249 aa).

NAD(+)-binding residues include S40 and F41. Position 48 (H48) interacts with ATP. The NAD(+) site is built by T97, G129, D131, R165, and N206. 214–217 lines the ATP pocket; that stretch reads TRAR.

Belongs to the eukaryotic NMN adenylyltransferase family. POF1 subfamily.

The protein localises to the cytoplasm. Its subcellular location is the nucleus. The catalysed reaction is beta-nicotinamide D-ribonucleotide + ATP + H(+) = diphosphate + NAD(+). The protein operates within cofactor biosynthesis; NAD(+) biosynthesis; NAD(+) from nicotinamide D-ribonucleotide: step 1/1. Catalyzes the formation of NAD(+) from nicotinamide mononucleotide (NMN) and ATP. Involved in the salvage pathway for NAD(+) biosynthesis via NMN. In Schizosaccharomyces pombe (strain 972 / ATCC 24843) (Fission yeast), this protein is Putative nicotinamide mononucleotide adenylyltransferase.